The sequence spans 452 residues: NADH-quinone oxidoreductase subunit H (452 aa).

A run of 9 helical transmembrane segments spans residues 28-48, 96-116, 136-156, 177-197, 210-230, 264-286, 301-321, 335-355, and 366-386; these read IILI…LMMI, VIYI…FSVI, LPVA…GIVL, VISY…YAGT, IWFA…MIGE, AEYV…GYLA, WWPA…FVWV, KLGW…VAVI, and YVTA…LWAW.

The protein belongs to the complex I subunit 1 family. NDH-1 is composed of 14 different subunits. Subunits NuoA, H, J, K, L, M, N constitute the membrane sector of the complex.

The protein localises to the cell membrane. The enzyme catalyses a quinone + NADH + 5 H(+)(in) = a quinol + NAD(+) + 4 H(+)(out). NDH-1 shuttles electrons from NADH, via FMN and iron-sulfur (Fe-S) centers, to quinones in the respiratory chain. The immediate electron acceptor for the enzyme in this species is believed to be ubiquinone. Couples the redox reaction to proton translocation (for every two electrons transferred, four hydrogen ions are translocated across the cytoplasmic membrane), and thus conserves the redox energy in a proton gradient. This subunit may bind ubiquinone. In Thermobifida fusca (strain YX), this protein is NADH-quinone oxidoreductase subunit H.